The sequence spans 105 residues: Large ribosomal subunit protein uL24 (105 aa).

The interval 75–105 is disordered; it reads DSDGNPTRVGYRTDEESGKRVRISRKNGKDI. A compositionally biased stretch (basic residues) spans 94 to 105; that stretch reads RVRISRKNGKDI.

This sequence belongs to the universal ribosomal protein uL24 family. As to quaternary structure, part of the 50S ribosomal subunit.

In terms of biological role, one of two assembly initiator proteins, it binds directly to the 5'-end of the 23S rRNA, where it nucleates assembly of the 50S subunit. One of the proteins that surrounds the polypeptide exit tunnel on the outside of the subunit. This is Large ribosomal subunit protein uL24 from Rhodococcus jostii (strain RHA1).